A 137-amino-acid chain; its full sequence is Nucleoside diphosphate kinase (137 aa).

Residues K9, F57, R85, T91, R102, and N112 each contribute to the ATP site. Residue H115 is the Pros-phosphohistidine intermediate of the active site.

This sequence belongs to the NDK family. In terms of assembly, homotetramer. Mg(2+) serves as cofactor.

The protein resides in the cytoplasm. The catalysed reaction is a 2'-deoxyribonucleoside 5'-diphosphate + ATP = a 2'-deoxyribonucleoside 5'-triphosphate + ADP. It carries out the reaction a ribonucleoside 5'-diphosphate + ATP = a ribonucleoside 5'-triphosphate + ADP. In terms of biological role, major role in the synthesis of nucleoside triphosphates other than ATP. The ATP gamma phosphate is transferred to the NDP beta phosphate via a ping-pong mechanism, using a phosphorylated active-site intermediate. The chain is Nucleoside diphosphate kinase from Thermus thermophilus (strain ATCC 27634 / DSM 579 / HB8).